The sequence spans 502 residues: ATP synthase subunit alpha (502 aa).

169–176 contacts ATP; the sequence is GDRQTGKT.

The protein belongs to the ATPase alpha/beta chains family. F-type ATPases have 2 components, CF(1) - the catalytic core - and CF(0) - the membrane proton channel. CF(1) has five subunits: alpha(3), beta(3), gamma(1), delta(1), epsilon(1). CF(0) has three main subunits: a(1), b(2) and c(9-12). The alpha and beta chains form an alternating ring which encloses part of the gamma chain. CF(1) is attached to CF(0) by a central stalk formed by the gamma and epsilon chains, while a peripheral stalk is formed by the delta and b chains.

It localises to the cell membrane. The catalysed reaction is ATP + H2O + 4 H(+)(in) = ADP + phosphate + 5 H(+)(out). Functionally, produces ATP from ADP in the presence of a proton gradient across the membrane. The alpha chain is a regulatory subunit. This chain is ATP synthase subunit alpha, found in Bacillus pumilus (strain SAFR-032).